Consider the following 765-residue polypeptide: MTSAVLDWMVQDSRRLAECRHDHPFSLLGPQQLESGQWVVRAWVPEAETVELILDGERLSMQTPHHPWVFEAECSRDPGHHYKLQIRRGGIEHEQFDPWAFRHEWMGEMDRHLFAEGNHHHIWRRMGAHRCQQGGIQGVMFCLWAPNALTVSVIGNLNSWDGRYHPMQQRLGGIWELFVPELEEGHFYKYEIRTQDGHCYQKADPYGFQHEVRPDTSSIVSHLDGFQWNDDAWINSRDRRNPLDQPISVYEMHLGSWIHASADDPFIEADGTPRPPVPAADLKPGARLLTYPELADRLIPYVKEQGFSHIELMPITEHPFDGSWGYQVTGWYAPTSRYGTPDEFRAFVDRCHAEGIGVIIDWVPGHFPKDSHGLAFFDGCHLYEHADPRIGEHKEWGTLIFNYSRNEVRNFLVANLVFWFDQFHIDGIRVDAVASMLYRDYLRPDGEWLANEHGGRENTEAVRFLQQANHVLFEHFPGALSIAEESTTWPMVTQPTENGGLGFNLKWNMGWMHDMLDYFELDPWFRQFHQNNITFSIWYTYTENFMLALSHDEVVHGKSHLLHKMPGDDWQKYANTRALLAYMWTHPGKKTIFMGMEFGQRAEWNVWGDLQWDLLNYEPHAGVHRMVKELNALYKQEPALWQDDFDQYGFQWIDCNDNRHSVISFMRRESTSGSWLVVVANFTPQSHSHYKVGVPISGFYEEIFNTDAAKYGGSNLGNLGGKPSDEWGIHGYENSLDLCLPPLSLMVFKHDPKKSLAEVTNKERA.

Asp431 (nucleophile) is an active-site residue. Glu484 (proton donor) is an active-site residue.

It belongs to the glycosyl hydrolase 13 family. GlgB subfamily. Monomer.

It carries out the reaction Transfers a segment of a (1-&gt;4)-alpha-D-glucan chain to a primary hydroxy group in a similar glucan chain.. It functions in the pathway glycan biosynthesis; glycogen biosynthesis. Catalyzes the formation of the alpha-1,6-glucosidic linkages in glycogen by scission of a 1,4-alpha-linked oligosaccharide from growing alpha-1,4-glucan chains and the subsequent attachment of the oligosaccharide to the alpha-1,6 position. The polypeptide is 1,4-alpha-glucan branching enzyme GlgB (Synechococcus sp. (strain CC9311)).